The following is a 346-amino-acid chain: Very-long-chain 3-oxoacyl-CoA reductase (346 aa).

Residues 23-43 (AAWIVFGLGISKMVFLTLNFS) traverse the membrane as a helical segment. NADP(+) is bound by residues Val69, Asp123, Asn150, Tyr222, Lys226, Val255, and Ser257. The active-site Proton donor is Tyr222. Lys226 serves as the catalytic Lowers pKa of active site Tyr.

It belongs to the short-chain dehydrogenases/reductases (SDR) family.

The protein resides in the endoplasmic reticulum membrane. It catalyses the reaction a very-long-chain (3R)-3-hydroxyacyl-CoA + NADP(+) = a very-long-chain 3-oxoacyl-CoA + NADPH + H(+). Its pathway is lipid metabolism; fatty acid biosynthesis. In terms of biological role, component of the microsomal membrane bound fatty acid elongation system, which produces the 26-carbon very long-chain fatty acids (VLCFA) from palmitate. Catalyzes the reduction of the 3-ketoacyl-CoA intermediate that is formed in each cycle of fatty acid elongation. VLCFAs serve as precursors for ceramide and sphingolipids. This Kluyveromyces lactis (strain ATCC 8585 / CBS 2359 / DSM 70799 / NBRC 1267 / NRRL Y-1140 / WM37) (Yeast) protein is Very-long-chain 3-oxoacyl-CoA reductase.